Reading from the N-terminus, the 769-residue chain is Cullin-3 (769 aa).

The tract at residues 614–655 (DRELPSTTSSTTTTTTTATSSSTSTSPSSSSSSISTPTPSKS) is disordered. The segment covering 618-653 (PSTTSSTTTTTTTATSSSTSTSPSSSSSSISTPTPS) has biased composition (low complexity). The Cullin neddylation domain maps to 699-761 (DRKHQIEASI…REYLERSKQD (63 aa)). K713 is covalently cross-linked (Glycyl lysine isopeptide (Lys-Gly) (interchain with G-Cter in NEDD8)).

The protein belongs to the cullin family. Neddylated. Deneddylated via its interaction with the COP9 signalosome (CSN) complex.

Its subcellular location is the nucleus. Its pathway is protein modification; protein ubiquitination. In terms of biological role, probable core component of cullin-based SCF-like E3 ubiquitin-protein ligase complexes which mediate the ubiquitination and subsequent proteasomal degradation of target proteins. The E3 ubiquitin-protein ligase activity of the complex is dependent on the neddylation of the cullin subunit. This chain is Cullin-3 (culC), found in Dictyostelium discoideum (Social amoeba).